The following is a 467-amino-acid chain: Asparagine--tRNA ligase (467 aa).

The protein belongs to the class-II aminoacyl-tRNA synthetase family. In terms of assembly, homodimer.

The protein localises to the cytoplasm. The catalysed reaction is tRNA(Asn) + L-asparagine + ATP = L-asparaginyl-tRNA(Asn) + AMP + diphosphate + H(+). The polypeptide is Asparagine--tRNA ligase (Mannheimia succiniciproducens (strain KCTC 0769BP / MBEL55E)).